The primary structure comprises 381 residues: Alkanesulfonate monooxygenase (381 aa).

It belongs to the SsuD family. As to quaternary structure, homotetramer.

The catalysed reaction is an alkanesulfonate + FMNH2 + O2 = an aldehyde + FMN + sulfite + H2O + 2 H(+). Its function is as follows. Catalyzes the desulfonation of aliphatic sulfonates. The polypeptide is Alkanesulfonate monooxygenase (Cronobacter sakazakii (strain ATCC BAA-894) (Enterobacter sakazakii)).